Reading from the N-terminus, the 195-residue chain is dITP/XTP pyrophosphatase (195 aa).

Substrate is bound at residue 8–13; it reads SGNAGK. Glu-38 and Asp-67 together coordinate Mg(2+). The active-site Proton acceptor is the Asp-67. Residues Ser-68, 146–149, Lys-169, and 174–175 each bind substrate; these read FGYD and HR.

Belongs to the HAM1 NTPase family. Homodimer. Requires Mg(2+) as cofactor.

The enzyme catalyses XTP + H2O = XMP + diphosphate + H(+). It catalyses the reaction dITP + H2O = dIMP + diphosphate + H(+). The catalysed reaction is ITP + H2O = IMP + diphosphate + H(+). Pyrophosphatase that catalyzes the hydrolysis of nucleoside triphosphates to their monophosphate derivatives, with a high preference for the non-canonical purine nucleotides XTP (xanthosine triphosphate), dITP (deoxyinosine triphosphate) and ITP. Seems to function as a house-cleaning enzyme that removes non-canonical purine nucleotides from the nucleotide pool, thus preventing their incorporation into DNA/RNA and avoiding chromosomal lesions. This is dITP/XTP pyrophosphatase from Parasynechococcus marenigrum (strain WH8102).